The sequence spans 1488 residues: Neuropathy target esterase sws (1488 aa).

Residues 1 to 34 (MDVLELLRASVNGCYNTLFSDAWSQYVSKQIATT) are Lumenal-facing. A helical membrane pass occupies residues 35-55 (TYWYGALLAIGALFIAWFLYF). The Cytoplasmic segment spans residues 56–1488 (KRLASLRLRD…ENVTEADTKN (1433 aa)). 175–302 (IFGHFEKPIF…IRVIQVIMIR (128 aa)) serves as a coordination point for a nucleoside 3',5'-cyclic phosphate. Disordered regions lie at residues 339–379 (PGPV…DPNP) and 402–440 (QQQQSSGVSVGGTHRSSGACTPTGSGGESPDGTGNATIT). Composition is skewed to low complexity over residues 344–356 (SQASQASRAMASR) and 402–413 (QQQQSSGVSVGG). Residues 415–424 (HRSSGACTPT) are compositionally biased toward polar residues. Residues 458–587 (ELGL…VVRR) and 576–703 (IVLD…LSHR) contribute to the a nucleoside 3',5'-cyclic phosphate site. The PNPLA domain maps to 929–1095 (LVLGGGGARG…VNNLPGHLWR (167 aa)). A GXGXXG motif is present at residues 933–938 (GGGARG). The short motif at 960 to 964 (GVSIG) is the GXSXG element. Residue S962 is the Nucleophile of the active site. Catalysis depends on D1082, which acts as the Proton acceptor. The DGA/G motif lies at 1082-1084 (DGG). S1176 is modified (phosphoserine). Disordered regions lie at residues 1348 to 1376 (RKVDKSTQSTPPTPNKKHPSTPTSSQGNL) and 1398 to 1488 (EHKR…DTKN). Residues 1399 to 1410 (HKRRQKSKHKRD) show a composition bias toward basic residues. Residues 1440 to 1452 (IDAKLDQLRKLQQ) are compositionally biased toward basic and acidic residues. Positions 1456-1470 (QGNESEQEQEQEQEQ) are enriched in acidic residues.

This sequence belongs to the NTE family. In terms of assembly, interacts with Pka-C3; interaction inhibits the catalytic function of Pka-C3 and the esterase activity of sws.

It is found in the endoplasmic reticulum membrane. The enzyme catalyses a 1-acyl-sn-glycero-3-phosphocholine + H2O = sn-glycerol 3-phosphocholine + a fatty acid + H(+). Phospholipase B that deacylates intracellular phosphatidylcholine (PtdCho), generating glycerophosphocholine (GroPtdCho). This deacylation occurs at both sn-2 and sn-1 positions of PtdCho. Its specific chemical modification by certain organophosphorus (OP) compounds leads to distal axonopathy. Plays a role in the signaling mechanism between neurons and glia that regulates glia wrapping during development of the adult brain. Essential for membrane lipid homeostasis and cell survival in both neurons and glia of the adult brain. This chain is Neuropathy target esterase sws, found in Drosophila mojavensis (Fruit fly).